A 120-amino-acid polypeptide reads, in one-letter code: Ribosome-binding factor A (120 aa).

It belongs to the RbfA family. Monomer. Binds 30S ribosomal subunits, but not 50S ribosomal subunits or 70S ribosomes.

Its subcellular location is the cytoplasm. In terms of biological role, one of several proteins that assist in the late maturation steps of the functional core of the 30S ribosomal subunit. Associates with free 30S ribosomal subunits (but not with 30S subunits that are part of 70S ribosomes or polysomes). Required for efficient processing of 16S rRNA. May interact with the 5'-terminal helix region of 16S rRNA. The chain is Ribosome-binding factor A from Chlamydia pneumoniae (Chlamydophila pneumoniae).